Here is a 108-residue protein sequence, read N- to C-terminus: Peptidyl-prolyl cis-trans isomerase Fkbp12 (108 aa).

Positions 1–21 are disordered; sequence MGVQVVPIAPGDGSTYPKNGQ. One can recognise a PPIase FKBP-type domain in the interval 20 to 108; that stretch reads GQKVTVHYTG…TFDVELLKVE (89 aa).

It belongs to the FKBP-type PPIase family. FKBP1 subfamily.

The protein localises to the cytoplasm. It carries out the reaction [protein]-peptidylproline (omega=180) = [protein]-peptidylproline (omega=0). In terms of biological role, PPIases accelerate the folding of proteins. It catalyzes the cis-trans isomerization of proline imidic peptide bonds in oligopeptides. Binds to ligand-free TGF beta type I receptor, from which it is released upon a ligand-induced, type II receptor mediated phosphorylation of the type I receptor. Binding is inhibitory to the signaling pathways of the TGF beta family ligands. The sequence is that of Peptidyl-prolyl cis-trans isomerase Fkbp12 from Drosophila melanogaster (Fruit fly).